Reading from the N-terminus, the 889-residue chain is DNA gyrase subunit A (889 aa).

Residues 35–501 (LPDVRDGLKP…GFEDLEDEDL (467 aa)) enclose the Topo IIA-type catalytic domain. Tyrosine 123 serves as the catalytic O-(5'-phospho-DNA)-tyrosine intermediate. The short motif at 528–534 (QNRGGRG) is the GyrA-box element. The segment at 810–889 (VKEDAEDETN…IQQSSDEDEE (80 aa)) is disordered. A compositionally biased stretch (acidic residues) spans 813–823 (DAEDETNEDEQ). The span at 863-875 (DGRIEVRQDFMDR) shows a compositional bias: basic and acidic residues. The span at 876-889 (VEEDIQQSSDEDEE) shows a compositional bias: acidic residues.

The protein belongs to the type II topoisomerase GyrA/ParC subunit family. In terms of assembly, heterotetramer, composed of two GyrA and two GyrB chains. In the heterotetramer, GyrA contains the active site tyrosine that forms a transient covalent intermediate with DNA, while GyrB binds cofactors and catalyzes ATP hydrolysis.

The protein resides in the cytoplasm. It catalyses the reaction ATP-dependent breakage, passage and rejoining of double-stranded DNA.. A type II topoisomerase that negatively supercoils closed circular double-stranded (ds) DNA in an ATP-dependent manner to modulate DNA topology and maintain chromosomes in an underwound state. Negative supercoiling favors strand separation, and DNA replication, transcription, recombination and repair, all of which involve strand separation. Also able to catalyze the interconversion of other topological isomers of dsDNA rings, including catenanes and knotted rings. Type II topoisomerases break and join 2 DNA strands simultaneously in an ATP-dependent manner. In Staphylococcus aureus (strain N315), this protein is DNA gyrase subunit A.